The following is a 248-amino-acid chain: Peptidyl-tRNA hydrolase (248 aa).

Tyrosine 14 lines the tRNA pocket. The active-site Proton acceptor is the histidine 19. Residues phenylalanine 64, asparagine 66, and asparagine 112 each coordinate tRNA. The tract at residues 190-248 (PRSSTGEASKGRKKAQKSEPGVAKTPAKAATPEAPAAGDIPAAPEDSRSPMQKLLDKFK) is disordered. Low complexity predominate over residues 212 to 226 (AKTPAKAATPEAPAA).

This sequence belongs to the PTH family. As to quaternary structure, monomer.

It localises to the cytoplasm. It carries out the reaction an N-acyl-L-alpha-aminoacyl-tRNA + H2O = an N-acyl-L-amino acid + a tRNA + H(+). Hydrolyzes ribosome-free peptidyl-tRNAs (with 1 or more amino acids incorporated), which drop off the ribosome during protein synthesis, or as a result of ribosome stalling. Functionally, catalyzes the release of premature peptidyl moieties from peptidyl-tRNA molecules trapped in stalled 50S ribosomal subunits, and thus maintains levels of free tRNAs and 50S ribosomes. The chain is Peptidyl-tRNA hydrolase from Ruegeria sp. (strain TM1040) (Silicibacter sp.).